A 521-amino-acid chain; its full sequence is Beta-glucosidase 6 (521 aa).

An N-terminal signal peptide occupies residues 1–38 (MGRIKSSSGRCSTARLEAVAVLVVVFGVASSSLRGCIA). Residues Q64, H165, and 210–211 (NE) each bind a beta-D-glucoside. Residue E211 is the Proton donor of the active site. Residues C230 and C238 are joined by a disulfide bond. N291 carries an N-linked (GlcNAc...) asparagine glycan. Y354 lines the a beta-D-glucoside pocket. N-linked (GlcNAc...) asparagine glycosylation is found at N362 and N372. Residues E427, W477, 484–485 (EW), and F493 contribute to the a beta-D-glucoside site. Residue E427 is the Nucleophile of the active site.

The protein belongs to the glycosyl hydrolase 1 family. In terms of assembly, homodimer.

It is found in the secreted. It carries out the reaction Hydrolysis of terminal, non-reducing beta-D-glucosyl residues with release of beta-D-glucose.. In terms of biological role, hydrolyzes glycosides, oligosaccharides and hydrophobic glycosides. Possesses gibberellin ester beta-D-glucosidase activity. Can hydrolyze gibberellin A4 beta-D-glucosyl ester in vitro. The sequence is that of Beta-glucosidase 6 from Oryza sativa subsp. japonica (Rice).